A 270-amino-acid chain; its full sequence is Protein tonB2 (270 aa).

At 1–51 (MATPQPVDARTQPWRETPGGDLVALGRPVRQALHLVRHNPAQGRVLSRRET) the chain is on the cytoplasmic side. Residues 52–69 (ILLVLFALTLHGAVIHWL) traverse the membrane as a helical segment. At 70–270 (SQQRTPALPE…VSVPIDFKLN (201 aa)) the chain is on the periplasmic side. Positions 80–187 (VPPQVPPMTI…LTPPSANAGY (108 aa)) are disordered. Pro residues predominate over residues 94-118 (PAPPVVEPPPPEPLPPVVEEPPPPV). A compositionally biased stretch (basic residues) spans 133–143 (PKPKPKPKPQP). The segment covering 144-180 (RPKPAPKAVEPAPPAPPQPAAPPAPPAPAAAPAPLTP) has biased composition (pro residues). The region spanning 180-270 (PPSANAGYLH…VSVPIDFKLN (91 aa)) is the TonB C-terminal domain.

It belongs to the TonB family. Homodimer. Forms a complex with the accessory proteins ExbB and ExbD.

It is found in the cell inner membrane. Functionally, interacts with outer membrane receptor proteins that carry out high-affinity binding and energy dependent uptake into the periplasmic space of specific substrates. It could act to transduce energy from the cytoplasmic membrane to specific energy-requiring processes in the outer membrane, resulting in the release into the periplasm of ligands bound by these outer membrane proteins. This is Protein tonB2 (tonB2) from Pseudomonas aeruginosa (strain ATCC 15692 / DSM 22644 / CIP 104116 / JCM 14847 / LMG 12228 / 1C / PRS 101 / PAO1).